A 150-amino-acid chain; its full sequence is Ribonuclease H (150 aa).

The RNase H type-1 domain maps to 1–141 (MKSIEVHTDG…VDVLARNQAT (141 aa)). Residues Asp9, Glu47, Asp69, and Asp133 each coordinate Mg(2+).

Belongs to the RNase H family. In terms of assembly, monomer. Mg(2+) serves as cofactor.

It is found in the cytoplasm. It catalyses the reaction Endonucleolytic cleavage to 5'-phosphomonoester.. Functionally, endonuclease that specifically degrades the RNA of RNA-DNA hybrids. The polypeptide is Ribonuclease H (Xanthomonas oryzae pv. oryzae (strain MAFF 311018)).